A 236-amino-acid polypeptide reads, in one-letter code: Giant extracellular hemoglobin linker 2 chain (236 aa).

Residues 66–108 (NGCEPRHFQCGGSAMECISDLLTCDGSPDCANGADEDSDVCHI) enclose the LDL-receptor class A domain. 3 disulfide bridges follow: Cys68–Cys82, Cys75–Cys95, and Cys89–Cys106.

As to quaternary structure, disulfide-linked dimer of identical chains. A model is proposed for the subunit structure of the Tylorrhynchus hemoglobin, consisting of 216 polypeptides chains, 192 heme-containing chains, and 24 linker chains.

Acts as a linker for the assembly of heme-containing chains in the construction of giant hemoglobin. The chain is Giant extracellular hemoglobin linker 2 chain from Tylorrhynchus heterochetus (Japanese palolo worm).